The primary structure comprises 115 residues: MQKLIEEITKEQLRTDLPAFRPGDTLRVHVKVVEGNRERIQVFEGVVIKRRGGGISETFTVRKISYGVGVERTFPLHTPKIAKIEVVRHGKVRRAKLYYLRELRGKAARIKEIRR.

This sequence belongs to the bacterial ribosomal protein bL19 family.

This protein is located at the 30S-50S ribosomal subunit interface and may play a role in the structure and function of the aminoacyl-tRNA binding site. This chain is Large ribosomal subunit protein bL19, found in Bacillus licheniformis (strain ATCC 14580 / DSM 13 / JCM 2505 / CCUG 7422 / NBRC 12200 / NCIMB 9375 / NCTC 10341 / NRRL NRS-1264 / Gibson 46).